Here is a 487-residue protein sequence, read N- to C-terminus: MNEILKKPYVELKDSLNSGKISSTELVSACINRIREVDGAVKAFLYLDEKKVLNSAEESDKRRKEGKPLSEFDGMPVAIKDNICIRDTITSCSSKILENYKSPFHATVVEKLLEKGFILFPRTNMDEFAMGSSTENSAFQTTRNPFDLERIPGGSSGGSAAAVAASMVPLALGSDTGGSVRQPASLCGLYGLKPTYGTVSRYGLVAYASSLDQIGPFSRELQGCIDLYSVISGKDVRDSTSIHRPKFSASDVQPQDFKGLKVGVIKMTPEIQSEVVKSYDKVLNQLKEKGATLVDIDFSKFGFAIPIYYIIATAECSSNLSRFDGIRFGSRKDKTGKLEDLFVDSRTEGFGPEVKRRILLGTFSLSAGYYDAYYGTAQKARALIRKEYESFFSKVDCILQPTSPTTAFKIGEKTKDPIQMYKADIWTTSVNLAGLPAMSVPMGADQKGLPIGLQITTPHFQEGKLFGIALALSTLEGMNIQFPESIK.

Catalysis depends on charge relay system residues K80 and S155. S179 serves as the catalytic Acyl-ester intermediate.

This sequence belongs to the amidase family. GatA subfamily. As to quaternary structure, heterotrimer of A, B and C subunits.

It carries out the reaction L-glutamyl-tRNA(Gln) + L-glutamine + ATP + H2O = L-glutaminyl-tRNA(Gln) + L-glutamate + ADP + phosphate + H(+). Functionally, allows the formation of correctly charged Gln-tRNA(Gln) through the transamidation of misacylated Glu-tRNA(Gln) in organisms which lack glutaminyl-tRNA synthetase. The reaction takes place in the presence of glutamine and ATP through an activated gamma-phospho-Glu-tRNA(Gln). This Leptospira interrogans serogroup Icterohaemorrhagiae serovar copenhageni (strain Fiocruz L1-130) protein is Glutamyl-tRNA(Gln) amidotransferase subunit A.